Here is a 543-residue protein sequence, read N- to C-terminus: Aspartate/alanine antiporter (543 aa).

10 helical membrane passes run 4–26 (IGNFLVGTPVFTIFICLALGYLL), 33–55 (SFTLGATVGVLIVALLIGQLGVF), 88–110 (FGAKIVYATLIFLVSAFIVAYAC), 117–139 (GPGIAAGIIAGGLTQSAVIGSSL), 159–178 (IPIVYTLTYVFGTIGVLIFL), 362–381 (IINYSWFALGIALSAALGIV), 385–407 (VSGVPIALGGGTASLIVGLVQSI), 428–450 (SIGLNLFIATVGLSAAKTFISAI), 455–477 (ISVLLIGAVISILPHIITFVICY), and 520–542 (VAPAYAIGNIFLTLMGPIFIVLL).

Belongs to the AAE transporter (TC 2.A.81) family.

The protein resides in the cell membrane. Catalyzes the electrogenic exchange of aspartate with alanine. The protein is Aspartate/alanine antiporter (aspT) of Tetragenococcus halophilus (Pediococcus halophilus).